Reading from the N-terminus, the 93-residue chain is Small ribosomal subunit protein uS19c (93 aa).

It belongs to the universal ribosomal protein uS19 family.

The protein localises to the plastid. It localises to the chloroplast. In terms of biological role, protein S19 forms a complex with S13 that binds strongly to the 16S ribosomal RNA. This Lolium perenne (Perennial ryegrass) protein is Small ribosomal subunit protein uS19c.